The following is a 594-amino-acid chain: Elongation factor 4 (594 aa).

Residues 2–184 (KNIRNFSIIA…TIVAKVPAPE (183 aa)) enclose the tr-type G domain. Residues 14-19 (DHGKST) and 131-134 (NKID) contribute to the GTP site.

Belongs to the TRAFAC class translation factor GTPase superfamily. Classic translation factor GTPase family. LepA subfamily.

Its subcellular location is the cell inner membrane. The catalysed reaction is GTP + H2O = GDP + phosphate + H(+). Required for accurate and efficient protein synthesis under certain stress conditions. May act as a fidelity factor of the translation reaction, by catalyzing a one-codon backward translocation of tRNAs on improperly translocated ribosomes. Back-translocation proceeds from a post-translocation (POST) complex to a pre-translocation (PRE) complex, thus giving elongation factor G a second chance to translocate the tRNAs correctly. Binds to ribosomes in a GTP-dependent manner. This Francisella tularensis subsp. tularensis (strain FSC 198) protein is Elongation factor 4.